The sequence spans 337 residues: Ribosomal RNA small subunit methyltransferase H (337 aa).

Residues 45 to 47 (GGH), aspartate 64, phenylalanine 91, aspartate 120, and glutamine 127 each bind S-adenosyl-L-methionine.

The protein belongs to the methyltransferase superfamily. RsmH family.

It is found in the cytoplasm. The enzyme catalyses cytidine(1402) in 16S rRNA + S-adenosyl-L-methionine = N(4)-methylcytidine(1402) in 16S rRNA + S-adenosyl-L-homocysteine + H(+). Functionally, specifically methylates the N4 position of cytidine in position 1402 (C1402) of 16S rRNA. The protein is Ribosomal RNA small subunit methyltransferase H of Corynebacterium glutamicum (strain ATCC 13032 / DSM 20300 / JCM 1318 / BCRC 11384 / CCUG 27702 / LMG 3730 / NBRC 12168 / NCIMB 10025 / NRRL B-2784 / 534).